Consider the following 120-residue polypeptide: Large ribosomal subunit protein uL18 (120 aa).

The protein belongs to the universal ribosomal protein uL18 family. In terms of assembly, part of the 50S ribosomal subunit; part of the 5S rRNA/L5/L18/L25 subcomplex. Contacts the 5S and 23S rRNAs.

In terms of biological role, this is one of the proteins that bind and probably mediate the attachment of the 5S RNA into the large ribosomal subunit, where it forms part of the central protuberance. The polypeptide is Large ribosomal subunit protein uL18 (Methylobacterium radiotolerans (strain ATCC 27329 / DSM 1819 / JCM 2831 / NBRC 15690 / NCIMB 10815 / 0-1)).